The sequence spans 183 residues: Ribosome-recycling factor (183 aa).

This sequence belongs to the RRF family.

The protein resides in the cytoplasm. Responsible for the release of ribosomes from messenger RNA at the termination of protein biosynthesis. May increase the efficiency of translation by recycling ribosomes from one round of translation to another. The protein is Ribosome-recycling factor of Afipia carboxidovorans (strain ATCC 49405 / DSM 1227 / KCTC 32145 / OM5) (Oligotropha carboxidovorans).